A 401-amino-acid polypeptide reads, in one-letter code: Argininosuccinate synthase (401 aa).

ATP is bound by residues 9-17 (AFSGGLDTS) and Ala-35. Residues Tyr-88 and Ser-93 each coordinate L-citrulline. Residue Gly-117 participates in ATP binding. 3 residues coordinate L-aspartate: Thr-119, Asn-123, and Asp-124. Asn-123 provides a ligand contact to L-citrulline. L-citrulline-binding residues include Arg-127 and Tyr-273.

The protein belongs to the argininosuccinate synthase family. Type 1 subfamily. Homotetramer.

The protein localises to the cytoplasm. It catalyses the reaction L-citrulline + L-aspartate + ATP = 2-(N(omega)-L-arginino)succinate + AMP + diphosphate + H(+). It functions in the pathway amino-acid biosynthesis; L-arginine biosynthesis; L-arginine from L-ornithine and carbamoyl phosphate: step 2/3. This Xylella fastidiosa (strain Temecula1 / ATCC 700964) protein is Argininosuccinate synthase.